Consider the following 274-residue polypeptide: Transcription factor MYB58 (274 aa).

HTH myb-type domains lie at 11-63 and 64-118; these read KTKV…INYL and RPDV…KKRL. 2 consecutive DNA-binding regions (H-T-H motif) follow at residues 39 to 63 and 91 to 114; these read WRSL…INYL and WSKI…HTHL. 2 disordered regions span residues 121–160 and 237–274; these read ETNL…ISSK and SELG…LLIH. The span at 263–274 shows a compositional bias: low complexity; the sequence is SSLLESYELLIH.

In terms of tissue distribution, expressed in leaves. Specifically expressed in fibers and vessels undergoing secondary wall thickening, especially in inflorescence stems.

The protein localises to the nucleus. In terms of biological role, transcriptional activator that binds DNA to the AC cis-elements 5'-ACCTACC-3', 5'-ACCAACC-3' and 5'-ACCTAAC-3' of promoters and specifically activates lignin biosynthetic genes during secondary wall formation mediated by SND1. This is Transcription factor MYB58 from Arabidopsis thaliana (Mouse-ear cress).